The sequence spans 414 residues: Cell division protein FtsA (414 aa).

The protein belongs to the FtsA/MreB family. In terms of assembly, self-interacts. Interacts with FtsZ.

The protein localises to the cell inner membrane. Cell division protein that is involved in the assembly of the Z ring. May serve as a membrane anchor for the Z ring. This is Cell division protein FtsA from Neisseria meningitidis serogroup B (strain ATCC BAA-335 / MC58).